A 316-amino-acid chain; its full sequence is Ornithine carbamoyltransferase (316 aa).

Carbamoyl phosphate contacts are provided by residues 59–62, glutamine 86, arginine 110, and 137–140; these read STRT and HPCQ. L-ornithine is bound by residues asparagine 168, aspartate 232, and 236–237; that span reads SM. Carbamoyl phosphate contacts are provided by residues 273–274 and arginine 301; that span reads CL.

Belongs to the aspartate/ornithine carbamoyltransferase superfamily. OTCase family.

It is found in the cytoplasm. It catalyses the reaction carbamoyl phosphate + L-ornithine = L-citrulline + phosphate + H(+). It functions in the pathway amino-acid degradation; L-arginine degradation via ADI pathway; carbamoyl phosphate from L-arginine: step 2/2. Functionally, reversibly catalyzes the transfer of the carbamoyl group from carbamoyl phosphate (CP) to the N(epsilon) atom of ornithine (ORN) to produce L-citrulline. This is Ornithine carbamoyltransferase from Listeria monocytogenes serotype 4a (strain HCC23).